Here is a 378-residue protein sequence, read N- to C-terminus: SWI/SNF-related matrix-associated actin-dependent regulator of chromatin subfamily B member 1 (378 aa).

The DNA-binding stretch occupies residues 1 to 106 (MIMALSKTFG…DEKYKAVSIS (106 aa)).

Belongs to the SNF5 family. In terms of assembly, component of the multiprotein chromatin-remodeling complexes SWI/SNF. Component of neural progenitors-specific chromatin remodeling complex (npBAF complex) and the neuron-specific chromatin remodeling complex (nBAF complex). Component of the BAF (SWI/SNF) chromatin remodeling complex. Component of the SWI/SNF-B (PBAF) chromatin remodeling complex. Binds to double-stranded DNA.

The protein resides in the nucleus. Involved in chromatin-remodeling. Core component of the BAF (SWI/SNF) complex. This ATP-dependent chromatin-remodeling complex plays important roles in cell proliferation and differentiation, in cellular antiviral activities and inhibition of tumor formation. Belongs to the neural progenitors-specific chromatin remodeling complex (npBAF complex) and the neuron-specific chromatin remodeling complex (nBAF complex) and may play a role in neural development. This chain is SWI/SNF-related matrix-associated actin-dependent regulator of chromatin subfamily B member 1 (smarcb1), found in Xenopus laevis (African clawed frog).